The primary structure comprises 318 residues: Homoserine kinase (318 aa).

97–107 (PIGSGLGSSAC) serves as a coordination point for ATP.

Belongs to the GHMP kinase family. Homoserine kinase subfamily.

It is found in the cytoplasm. The catalysed reaction is L-homoserine + ATP = O-phospho-L-homoserine + ADP + H(+). The protein operates within amino-acid biosynthesis; L-threonine biosynthesis; L-threonine from L-aspartate: step 4/5. Functionally, catalyzes the ATP-dependent phosphorylation of L-homoserine to L-homoserine phosphate. In Vibrio atlanticus (strain LGP32) (Vibrio splendidus (strain Mel32)), this protein is Homoserine kinase.